Reading from the N-terminus, the 294-residue chain is Dof zinc finger protein DOF4.1 (294 aa).

The segment at 68 to 122 (RNCPRCNSSNTKFCYYNNYSLAQPRYLCKSCRRYWTEGGSLRNVPVGGGSRKNKK) adopts a Dof-type zinc-finger fold. The Zn(2+) site is built by C70, C73, C95, and C98. 2 disordered regions span residues 109–178 (RNVP…DKRA) and 247–294 (MYPY…GPTW). Composition is skewed to polar residues over residues 126–136 (PNSSTSSSTKN) and 157–173 (KTHQ…SSPM). The segment covering 251–273 (GDHEDRQQHHHVRHDDGNKKREG) has biased composition (basic and acidic residues). A compositionally biased stretch (gly residues) spans 284–294 (ILGGDSGGPTW).

It is found in the nucleus. Its function is as follows. Transcription factor that binds specifically to a 5'-AA[AG]G-3' consensus core sequence. The protein is Dof zinc finger protein DOF4.1 (DOF4.1) of Arabidopsis thaliana (Mouse-ear cress).